The primary structure comprises 576 residues: Putative export ATP-binding/permease protein RT0691 (576 aa).

Residues leucine 20–leucine 303 form the ABC transmembrane type-1 domain. Helical transmembrane passes span isoleucine 21 to phenylalanine 41, isoleucine 61 to phenylalanine 81, phenylalanine 135 to phenylalanine 155, phenylalanine 158 to phenylalanine 178, alanine 242 to isoleucine 262, and isoleucine 277 to leucine 297. The region spanning isoleucine 336–glutamate 572 is the ABC transporter domain. Glycine 371–serine 378 provides a ligand contact to ATP.

The protein belongs to the ABC transporter superfamily. Homodimer.

Its subcellular location is the cell inner membrane. Functionally, part of an ABC transporter complex. Transmembrane domains (TMD) form a pore in the inner membrane and the ATP-binding domain (NBD) is responsible for energy generation. The sequence is that of Putative export ATP-binding/permease protein RT0691 from Rickettsia typhi (strain ATCC VR-144 / Wilmington).